A 328-amino-acid chain; its full sequence is GTPase Obg (328 aa).

In terms of domain architecture, Obg spans 2-160 (YNFKDSVSIT…LNVRLELFLV (159 aa)). Positions 161 to 326 (ADIGLVGLPN…LIKEFFVLAK (166 aa)) constitute an OBG-type G domain. Residues 167 to 174 (GLPNAGKS), 192 to 196 (FTTKI), 213 to 216 (DIPG), 280 to 283 (NKLD), and 307 to 309 (SIY) each bind GTP. Positions 174 and 194 each coordinate Mg(2+).

The protein belongs to the TRAFAC class OBG-HflX-like GTPase superfamily. OBG GTPase family. As to quaternary structure, monomer. Mg(2+) is required as a cofactor.

It is found in the cytoplasm. Its function is as follows. An essential GTPase which binds GTP, GDP and possibly (p)ppGpp with moderate affinity, with high nucleotide exchange rates and a fairly low GTP hydrolysis rate. Plays a role in control of the cell cycle, stress response, ribosome biogenesis and in those bacteria that undergo differentiation, in morphogenesis control. The sequence is that of GTPase Obg from Borreliella afzelii (strain PKo) (Borrelia afzelii).